The sequence spans 601 residues: Phosphomethylpyrimidine synthase (601 aa).

Residues asparagine 224, methionine 253, tyrosine 282, histidine 318, 338–340 (SRG), 379–382 (DGLR), and glutamate 418 contribute to the substrate site. Histidine 422 serves as a coordination point for Zn(2+). Tyrosine 445 contacts substrate. A Zn(2+)-binding site is contributed by histidine 486. Cysteine 566, cysteine 569, and cysteine 574 together coordinate [4Fe-4S] cluster.

It belongs to the ThiC family. Homodimer. [4Fe-4S] cluster is required as a cofactor.

The catalysed reaction is 5-amino-1-(5-phospho-beta-D-ribosyl)imidazole + S-adenosyl-L-methionine = 4-amino-2-methyl-5-(phosphooxymethyl)pyrimidine + CO + 5'-deoxyadenosine + formate + L-methionine + 3 H(+). It participates in cofactor biosynthesis; thiamine diphosphate biosynthesis. Functionally, catalyzes the synthesis of the hydroxymethylpyrimidine phosphate (HMP-P) moiety of thiamine from aminoimidazole ribotide (AIR) in a radical S-adenosyl-L-methionine (SAM)-dependent reaction. This chain is Phosphomethylpyrimidine synthase, found in Xylella fastidiosa (strain 9a5c).